A 554-amino-acid polypeptide reads, in one-letter code: MSNETNSSNFIKNIIINDLETGKHDSIITRFPPEPNGYLHIGHAKSICLNFGLAKEFNGKANLRFDDTNPLKEDVEYVESIKEDVKWLGFDWNELNFASNYFDEMYKRALILIKKGKAYVCDLTQEEMREYRGTLTEPGKESPHRNRTIEENLDLFERMKNGEFKDGEKTLRAKIDMSSPNINLRDPIIYRISHSTHHNTGDKWCIYPMYAFAHPIEDAIEGITHSICTLEFEDQRPLYDWFVKECEMENIPRQIEFARLNINNTVMSKRKLKQLVDEGIVDGWDDPRVPTISGIRRKGYTAEALRNFCSEIGVSKVNSTVDSQMLDYFLRENLQPKAPLTMGVLRPLKLIITNYPEDKIEMLEIENNAKDESQGKRLVPFSRELYIEQDDFMEEPVKKYFRFFPGNEVRLKGAYFVKCTDVIKDENGNVVEIHGTYDPETKSGSGFTGRKVKSTIHWVDAKSAIPCEFRLFEPLILDDIPENEGKHFLEQINPNSLEILQGFVEPTQIKDAKPFDKFQFVRNGFFSIDNKYTTDEKFVFNRIVPLKSSFKPGK.

The 'HIGH' region signature appears at 33–43 (PEPNGYLHIGH). Residues 34–36 (EPN) and 40–46 (HIGHAKS) each bind ATP. Residues Asp66 and Tyr210 each contribute to the L-glutamine site. Residues Thr229, 259–260 (RL), and 267–269 (MSK) each bind ATP. A 'KMSKS' region motif is present at residues 266 to 270 (VMSKR).

The protein belongs to the class-I aminoacyl-tRNA synthetase family. In terms of assembly, monomer.

Its subcellular location is the cytoplasm. The catalysed reaction is tRNA(Gln) + L-glutamine + ATP = L-glutaminyl-tRNA(Gln) + AMP + diphosphate. The sequence is that of Glutamine--tRNA ligase from Clostridioides difficile (strain 630) (Peptoclostridium difficile).